We begin with the raw amino-acid sequence, 35 residues long: Photosystem II reaction center protein T (35 aa).

Residues 3 to 23 traverse the membrane as a helical segment; it reads ALVYTFLLVSTLGIIFFAIFF.

The protein belongs to the PsbT family. PSII is composed of 1 copy each of membrane proteins PsbA, PsbB, PsbC, PsbD, PsbE, PsbF, PsbH, PsbI, PsbJ, PsbK, PsbL, PsbM, PsbT, PsbY, PsbZ, Psb30/Ycf12, at least 3 peripheral proteins of the oxygen-evolving complex and a large number of cofactors. It forms dimeric complexes.

The protein localises to the plastid. It localises to the chloroplast thylakoid membrane. Found at the monomer-monomer interface of the photosystem II (PS II) dimer, plays a role in assembly and dimerization of PSII. PSII is a light-driven water plastoquinone oxidoreductase, using light energy to abstract electrons from H(2)O, generating a proton gradient subsequently used for ATP formation. This Stewartia pseudocamellia (Japanese stewartia) protein is Photosystem II reaction center protein T.